We begin with the raw amino-acid sequence, 303 residues long: MTRCDVLVVGGTHGNEINGAWLVDQWRDQHDLLDAAGLSLALEIGNPEARTANRRYVDRDLNRCFTADLLNQGGQEQELQRARQLLAWHGPDGATPCRVALDLHSTTAAMGSCLVVYGRRPADLALAARVQGALGLPIYLHEADAAQTGFLVEQWPCGLVIEVGPVPQGVLDALVVRQTRIALETCCQELAAARAGTGRDPHNLVVHRHLGSVDLPRDQRDCAAAMVHPQLQGQDWRPLMDGAAMFELPRGGTVPLQADEGETWPLFINEAAYAEKRIAFSLTRREVWPIDPSWGQALEQLMG.

Zn(2+) contacts are provided by histidine 13 and glutamate 16. Substrate is bound by residues arginine 55 and 62–63 (NR). Zn(2+) is bound at residue histidine 104. Residues glutamate 162 and tyrosine 273 each contribute to the substrate site.

Belongs to the AspA/AstE family. Aspartoacylase subfamily. Zn(2+) serves as cofactor.

It carries out the reaction an N-acyl-L-aspartate + H2O = a carboxylate + L-aspartate. This Parasynechococcus marenigrum (strain WH8102) protein is Probable aspartoacylase.